The sequence spans 116 residues: Large ribosomal subunit protein bL19 (116 aa).

Belongs to the bacterial ribosomal protein bL19 family.

Functionally, this protein is located at the 30S-50S ribosomal subunit interface and may play a role in the structure and function of the aminoacyl-tRNA binding site. This is Large ribosomal subunit protein bL19 from Staphylococcus carnosus (strain TM300).